Reading from the N-terminus, the 131-residue chain is Large ribosomal subunit protein bL19 (131 aa).

Belongs to the bacterial ribosomal protein bL19 family.

Its function is as follows. This protein is located at the 30S-50S ribosomal subunit interface and may play a role in the structure and function of the aminoacyl-tRNA binding site. This Polynucleobacter necessarius subsp. necessarius (strain STIR1) protein is Large ribosomal subunit protein bL19.